Consider the following 304-residue polypeptide: Acetylglutamate kinase (304 aa).

Residues 72-73, R94, and N199 each bind substrate; that span reads GG.

Belongs to the acetylglutamate kinase family. ArgB subfamily.

The protein localises to the cytoplasm. It catalyses the reaction N-acetyl-L-glutamate + ATP = N-acetyl-L-glutamyl 5-phosphate + ADP. It functions in the pathway amino-acid biosynthesis; L-arginine biosynthesis; N(2)-acetyl-L-ornithine from L-glutamate: step 2/4. In terms of biological role, catalyzes the ATP-dependent phosphorylation of N-acetyl-L-glutamate. The chain is Acetylglutamate kinase from Methylobacterium nodulans (strain LMG 21967 / CNCM I-2342 / ORS 2060).